The sequence spans 996 residues: Poly [ADP-ribose] polymerase (996 aa).

Residues 1 to 369 (MEIDLPFKVE…TSTILKNISL (369 aa)) mediate DNA binding. 2 PARP-type zinc fingers span residues 7–89 (FKVE…DNCT) and 114–203 (FGIE…PVIK). Zn(2+) contacts are provided by Cys19, Cys22, His51, Cys54, Cys126, Cys129, His161, and Cys164. 2 short sequence motifs (nuclear localization signal) span residues 211–214 (KKAK) and 232–235 (KIKK). The PADR1 zinc-binding domain maps to 220–358 (EEDAASIKEL…EVRAIRYIPP (139 aa)). A zinc ribbon region spans residues 286 to 329 (GALLPCTDCKGRQLLFHKSGYLCNGDLTEWTKCTKLLKEPERKS). Zn(2+)-binding residues include Cys291, Cys294, Cys308, and Cys318. The interval 370–507 (KKGDELDGPK…SIYTKSVPKS (138 aa)) is automodification domain. The 92-residue stretch at 382–473 (RERPPLYNIE…AGAINYISSM (92 aa)) folds into the BRCT domain. Residues 527-625 (VAHVYVSRNK…ENFVKVAGRM (99 aa)) enclose the WGR domain. A PARP alpha-helical domain is found at 647–764 (KSKLPLSVQD…EIECAYSLLQ (118 aa)). The region spanning 773-996 (NPIDKHYEQL…YMLRMNFKYK (224 aa)) is the PARP catalytic domain.

This sequence belongs to the ARTD/PARP family.

The protein resides in the nucleus. It catalyses the reaction NAD(+) + (ADP-D-ribosyl)n-acceptor = nicotinamide + (ADP-D-ribosyl)n+1-acceptor + H(+).. The catalysed reaction is L-aspartyl-[protein] + NAD(+) = 4-O-(ADP-D-ribosyl)-L-aspartyl-[protein] + nicotinamide. It carries out the reaction L-glutamyl-[protein] + NAD(+) = 5-O-(ADP-D-ribosyl)-L-glutamyl-[protein] + nicotinamide. Functionally, poly-ADP-ribosyltransferase that mediates poly-ADP-ribosylation of proteins and plays a key role in DNA repair. Mainly mediates glutamate and aspartate ADP-ribosylation of target proteins: the ADP-D-ribosyl group of NAD(+) is transferred to the acceptor carboxyl group of glutamate and aspartate residues and further ADP-ribosyl groups are transferred to the 2'-position of the terminal adenosine moiety, building up a polymer with an average chain length of 20-30 units. The sequence is that of Poly [ADP-ribose] polymerase from Sarcophaga peregrina (Flesh fly).